A 906-amino-acid chain; its full sequence is Probable disease resistance RPP8-like protein 2 (906 aa).

The stretch at 15 to 68 (ELLSRESARLNGIDEQVDGLKRQLGRLQSLLKDADAKKNETERVRNFLEDVKDI) forms a coiled coil. Positions 144–454 (LQERQREIRQ…AEGIITPFHD (311 aa)) constitute an NB-ARC domain. Position 190–197 (190–197 (GMGGIGKT)) interacts with ATP. 10 LRR repeats span residues 573-597 (LPLL…SIGD), 598-621 (LIHL…LGNL), 623-644 (LLLC…NVLK), 646-671 (MQEL…DLVN), 672-696 (LESL…KLSV), 704-727 (ECTF…SFHD), 740-766 (LLVL…QYRF), 767-790 (PPHL…ILEK), 791-818 (LLHL…GFPQ), and 840-865 (MPCL…KYVT).

The protein belongs to the disease resistance NB-LRR family. RPP8/HRT subfamily.

Its function is as follows. Potential disease resistance protein. The protein is Probable disease resistance RPP8-like protein 2 (RPP8L2) of Arabidopsis thaliana (Mouse-ear cress).